We begin with the raw amino-acid sequence, 243 residues long: Orotidine 5'-phosphate decarboxylase (243 aa).

Substrate contacts are provided by residues Asp16, Lys38, 65–74 (DLKLHDIPNT), Thr120, Arg181, Gln190, Gly210, and Arg211. Lys67 (proton donor) is an active-site residue.

This sequence belongs to the OMP decarboxylase family. Type 1 subfamily. In terms of assembly, homodimer.

It carries out the reaction orotidine 5'-phosphate + H(+) = UMP + CO2. It participates in pyrimidine metabolism; UMP biosynthesis via de novo pathway; UMP from orotate: step 2/2. Its function is as follows. Catalyzes the decarboxylation of orotidine 5'-monophosphate (OMP) to uridine 5'-monophosphate (UMP). The protein is Orotidine 5'-phosphate decarboxylase of Bradyrhizobium sp. (strain ORS 278).